Reading from the N-terminus, the 361-residue chain is S-adenosylmethionine:tRNA ribosyltransferase-isomerase (361 aa).

It belongs to the QueA family. In terms of assembly, monomer.

Its subcellular location is the cytoplasm. It catalyses the reaction 7-aminomethyl-7-carbaguanosine(34) in tRNA + S-adenosyl-L-methionine = epoxyqueuosine(34) in tRNA + adenine + L-methionine + 2 H(+). Its pathway is tRNA modification; tRNA-queuosine biosynthesis. Its function is as follows. Transfers and isomerizes the ribose moiety from AdoMet to the 7-aminomethyl group of 7-deazaguanine (preQ1-tRNA) to give epoxyqueuosine (oQ-tRNA). The chain is S-adenosylmethionine:tRNA ribosyltransferase-isomerase from Rhizobium johnstonii (strain DSM 114642 / LMG 32736 / 3841) (Rhizobium leguminosarum bv. viciae).